A 519-amino-acid polypeptide reads, in one-letter code: NADH-quinone oxidoreductase subunit N (519 aa).

14 helical membrane-spanning segments follow: residues 22 to 42, 53 to 73, 87 to 107, 141 to 161, 163 to 183, 198 to 218, 242 to 262, 287 to 307, 310 to 330, 336 to 356, 363 to 383, 406 to 426, 442 to 461, and 483 to 503; these read LLPM…EAFV, VLAL…TGLP, PTLF…LLIA, TEVF…PAAN, LITA…LAGM, YFLL…LVYG, IIVG…GVPF, VAAF…LAWD, PVIW…GITQ, LLAY…AATT, VLFY…IVIL, LVAG…PTSG, AGPL…YYYL, and GALA…LGIV.

It belongs to the complex I subunit 2 family. As to quaternary structure, NDH-1 is composed of 14 different subunits. Subunits NuoA, H, J, K, L, M, N constitute the membrane sector of the complex.

The protein localises to the cell membrane. It catalyses the reaction a quinone + NADH + 5 H(+)(in) = a quinol + NAD(+) + 4 H(+)(out). Its function is as follows. NDH-1 shuttles electrons from NADH, via FMN and iron-sulfur (Fe-S) centers, to quinones in the respiratory chain. The immediate electron acceptor for the enzyme in this species is believed to be a menaquinone. Couples the redox reaction to proton translocation (for every two electrons transferred, four hydrogen ions are translocated across the cytoplasmic membrane), and thus conserves the redox energy in a proton gradient. In Acidothermus cellulolyticus (strain ATCC 43068 / DSM 8971 / 11B), this protein is NADH-quinone oxidoreductase subunit N.